The sequence spans 183 residues: PLAT domain-containing protein 2 (183 aa).

Positions Met1 to Ala25 are cleaved as a signal peptide. A PLAT domain is found at Cys31 to Asn158.

Its subcellular location is the endoplasmic reticulum. Involved in response to abiotic stress. The protein is PLAT domain-containing protein 2 of Arabidopsis thaliana (Mouse-ear cress).